We begin with the raw amino-acid sequence, 452 residues long: Tubulin alpha-6 chain (452 aa).

Glutamine 11, glutamate 69, serine 138, glycine 142, threonine 143, threonine 177, asparagine 204, and asparagine 226 together coordinate GTP. Glutamate 69 serves as a coordination point for Mg(2+). The active site involves glutamate 252.

The protein belongs to the tubulin family. As to quaternary structure, dimer of alpha and beta chains. A typical microtubule is a hollow water-filled tube with an outer diameter of 25 nm and an inner diameter of 15 nM. Alpha-beta heterodimers associate head-to-tail to form protofilaments running lengthwise along the microtubule wall with the beta-tubulin subunit facing the microtubule plus end conferring a structural polarity. Microtubules usually have 13 protofilaments but different protofilament numbers can be found in some organisms and specialized cells. The cofactor is Mg(2+).

The protein localises to the cytoplasm. It is found in the cytoskeleton. It localises to the spindle. It catalyses the reaction GTP + H2O = GDP + phosphate + H(+). Functionally, tubulin is the major constituent of microtubules, a cylinder consisting of laterally associated linear protofilaments composed of alpha- and beta-tubulin heterodimers. Microtubules grow by the addition of GTP-tubulin dimers to the microtubule end, where a stabilizing cap forms. Below the cap, tubulin dimers are in GDP-bound state, owing to GTPase activity of alpha-tubulin. The polypeptide is Tubulin alpha-6 chain (TUBA6) (Naegleria pringsheimi (Amoeba)).